The primary structure comprises 584 residues: Arginine--tRNA ligase (584 aa).

Positions 127–137 (PNLAKEMHVGH) match the 'HIGH' region motif.

It belongs to the class-I aminoacyl-tRNA synthetase family. Monomer.

Its subcellular location is the cytoplasm. It carries out the reaction tRNA(Arg) + L-arginine + ATP = L-arginyl-tRNA(Arg) + AMP + diphosphate. The chain is Arginine--tRNA ligase from Alcanivorax borkumensis (strain ATCC 700651 / DSM 11573 / NCIMB 13689 / SK2).